A 209-amino-acid polypeptide reads, in one-letter code: Uridine kinase (209 aa).

12-19 (GGSASGKT) contacts ATP.

The protein belongs to the uridine kinase family.

The protein localises to the cytoplasm. The enzyme catalyses uridine + ATP = UMP + ADP + H(+). The catalysed reaction is cytidine + ATP = CMP + ADP + H(+). The protein operates within pyrimidine metabolism; CTP biosynthesis via salvage pathway; CTP from cytidine: step 1/3. It functions in the pathway pyrimidine metabolism; UMP biosynthesis via salvage pathway; UMP from uridine: step 1/1. The chain is Uridine kinase from Chloroflexus aggregans (strain MD-66 / DSM 9485).